A 344-amino-acid polypeptide reads, in one-letter code: Arginine N-succinyltransferase (344 aa).

L125 provides a ligand contact to succinyl-CoA. Residue H229 is the Proton donor of the active site.

The protein belongs to the arginine N-succinyltransferase family.

The enzyme catalyses succinyl-CoA + L-arginine = N(2)-succinyl-L-arginine + CoA + H(+). Its pathway is amino-acid degradation; L-arginine degradation via AST pathway; L-glutamate and succinate from L-arginine: step 1/5. In terms of biological role, catalyzes the transfer of succinyl-CoA to arginine to produce N(2)-succinylarginine. This is Arginine N-succinyltransferase from Salmonella agona (strain SL483).